The following is a 689-amino-acid chain: MFGSGNVLPVKIQPPLLRPLAYRVLSRKYGLSIKSDGLSALAEFVGTNIGANWRQGPATIKFLEQFAAVWKQQERGLFIDQSGVKEVIQEMKEREKVEWSHEHPIQHEENILGRTDDDENNSDDEMPIAADSSLQNVSLSSPMRQPTERDEYKQPFKPESSKALDWRDYFKVINASQQQRFSYNPHKMQFIFVPNKKQNGLGGIAGFLPDIEDKVQMFLTRYYLTNDRVMRNENFQNSDMFNPLSSMVSLQNELSNTNRQQQSSSMSITPIKNLLGRDAQNFLLLGLLNKNFKGNWSLEDPSGSVEIDISQTIPTQGHYYVPGCMVLVEGIYYSVGNKFHVTSMTLPPGERREITLETIGNLDLLGIHGISNNNFIARLDKDLKIRLHLLEKELTDHKFVILGANLFLDDLKIMTALSKILQKLNDDPPTLLIWQGSFTSVPVFASMSSRNISSSTQFKNNFDALATLLSRFDNLTENTTMIFIPGPNDLWGSMVSLGASGTLPQDPIPSAFTKKINKVCKNVVWSSNPTRIAYLSQEIVIFRDDLSGRFKRHRLEFPFNESEDVYTENDNMMSKDTDIVPIDELVKEPDQLPQKVQETRKLVKTILDQGHLSPFLDSLRPISWDLDHTLTLCPIPSTMVLCDTTSAQFDLTYNGCKVINPGSFIHNRRARYMEYVPSSKKTIQEEIYI.

Over residues 98 to 115 (EWSHEHPIQHEENILGRT) the composition is skewed to basic and acidic residues. A disordered region spans residues 98-155 (EWSHEHPIQHEENILGRTDDDENNSDDEMPIAADSSLQNVSLSSPMRQPTERDEYKQP). The span at 116 to 126 (DDDENNSDDEM) shows a compositional bias: acidic residues. Ser-122 carries the phosphoserine modification. Polar residues predominate over residues 132–144 (SSLQNVSLSSPMR). Ser-141 is modified (phosphoserine; by CDC28). The span at 146 to 155 (PTERDEYKQP) shows a compositional bias: basic and acidic residues. Ser-613 carries the post-translational modification Phosphoserine.

The protein belongs to the DNA polymerase epsilon subunit B family. As to quaternary structure, DNA polymerase epsilon is a heterotetramer consisting of POL2, DPB2, DPB3 and DPB4. Post-translationally, phosphorylated in a cell cycle dependent manner during late G1 phase. Phosphorylation may facilitate the interaction with POL2 or the activity of DNA polymerase II. Phosphorylation is independent of DNA replication but dependent upon CDC28 in vivo. Both Ser-141 and Ser-613 are phosphorylated in vivo, but in vitro only Ser-141 is phosphorylated by CDC28.

Its subcellular location is the cytoplasm. It is found in the nucleus. As accessory component of the DNA polymerase epsilon complex participates in chromosomal DNA replication. It is required during synthesis of the leading and lagging DNA strands at the replication fork and binds at/or near replication origins and moves along DNA with the replication fork. It has 3'-5' proofreading exonuclease activity that correct errors arising during DNA replication. It is also involved in DNA synthesis during DNA repair. In Saccharomyces cerevisiae (strain ATCC 204508 / S288c) (Baker's yeast), this protein is DNA polymerase epsilon subunit B (DPB2).